The primary structure comprises 177 residues: MTNIRIKLLTVQVITSLASGENIDFEKVEKLVKDAGFVIGDIKALIAAIHFIIFNSVKNDVDESTLSTELQQLGLPKEHCDSISRAFREHKEKLRSIFHNNTLKLPSLHSLDWRVDFILSSNTIQEVNSPSVQLNFKVKNHSNNEITNHPFEISAKKFNVLYYELKGAKLLMETVNQ.

The COMM domain maps to Ser-107–Asn-176.

This sequence belongs to the COMM domain-containing protein 4 family. Component of the commander complex consisting of the CCC subcomplex and the retriever subcomplex. Component of the CCC subcomplex.

Functionally, scaffold protein in the commander complex that is essential for endosomal recycling of transmembrane cargos; the commander complex is composed of the CCC subcomplex and the retriever subcomplex. This Dictyostelium discoideum (Social amoeba) protein is COMM domain-containing protein 4 (commd4).